The following is a 282-amino-acid chain: Shikimate dehydrogenase (NADP(+)) (282 aa).

Shikimate-binding positions include 15 to 17 (SKS) and Thr62. Lys66 functions as the Proton acceptor in the catalytic mechanism. The shikimate site is built by Asn87 and Asp103. Residues 127–131 (GAGGA), 151–156 (NRTHTK), and Met220 contribute to the NADP(+) site. A shikimate-binding site is contributed by Tyr222. Gly244 contacts NADP(+).

Belongs to the shikimate dehydrogenase family. In terms of assembly, homodimer.

The enzyme catalyses shikimate + NADP(+) = 3-dehydroshikimate + NADPH + H(+). Its pathway is metabolic intermediate biosynthesis; chorismate biosynthesis; chorismate from D-erythrose 4-phosphate and phosphoenolpyruvate: step 4/7. Its function is as follows. Involved in the biosynthesis of the chorismate, which leads to the biosynthesis of aromatic amino acids. Catalyzes the reversible NADPH linked reduction of 3-dehydroshikimate (DHSA) to yield shikimate (SA). The chain is Shikimate dehydrogenase (NADP(+)) from Shewanella baltica (strain OS185).